We begin with the raw amino-acid sequence, 130 residues long: Protein ApaG (130 aa).

The ApaG domain occupies 3–127 (RAVTRGIEVS…FSLDIPEQRR (125 aa)).

The polypeptide is Protein ApaG (Brucella anthropi (strain ATCC 49188 / DSM 6882 / CCUG 24695 / JCM 21032 / LMG 3331 / NBRC 15819 / NCTC 12168 / Alc 37) (Ochrobactrum anthropi)).